A 330-amino-acid chain; its full sequence is Aspartate--ammonia ligase (330 aa).

It belongs to the class-II aminoacyl-tRNA synthetase family. AsnA subfamily.

It localises to the cytoplasm. The catalysed reaction is L-aspartate + NH4(+) + ATP = L-asparagine + AMP + diphosphate + H(+). The protein operates within amino-acid biosynthesis; L-asparagine biosynthesis; L-asparagine from L-aspartate (ammonia route): step 1/1. The protein is Aspartate--ammonia ligase of Streptococcus pyogenes serotype M3 (strain ATCC BAA-595 / MGAS315).